The primary structure comprises 178 residues: Adenine phosphoribosyltransferase (178 aa).

It belongs to the purine/pyrimidine phosphoribosyltransferase family. In terms of assembly, homodimer.

It is found in the cytoplasm. The enzyme catalyses AMP + diphosphate = 5-phospho-alpha-D-ribose 1-diphosphate + adenine. Its pathway is purine metabolism; AMP biosynthesis via salvage pathway; AMP from adenine: step 1/1. Catalyzes a salvage reaction resulting in the formation of AMP, that is energically less costly than de novo synthesis. This chain is Adenine phosphoribosyltransferase, found in Mycoplasmoides gallisepticum (strain R(low / passage 15 / clone 2)) (Mycoplasma gallisepticum).